Here is a 122-residue protein sequence, read N- to C-terminus: Large ribosomal subunit protein uL14 (122 aa).

Belongs to the universal ribosomal protein uL14 family. As to quaternary structure, part of the 50S ribosomal subunit. Forms a cluster with proteins L3 and L19. In the 70S ribosome, L14 and L19 interact and together make contacts with the 16S rRNA in bridges B5 and B8.

In terms of biological role, binds to 23S rRNA. Forms part of two intersubunit bridges in the 70S ribosome. In Petrotoga mobilis (strain DSM 10674 / SJ95), this protein is Large ribosomal subunit protein uL14.